We begin with the raw amino-acid sequence, 157 residues long: Transcription elongation factor GreA (157 aa).

It belongs to the GreA/GreB family.

Functionally, necessary for efficient RNA polymerase transcription elongation past template-encoded arresting sites. The arresting sites in DNA have the property of trapping a certain fraction of elongating RNA polymerases that pass through, resulting in locked ternary complexes. Cleavage of the nascent transcript by cleavage factors such as GreA or GreB allows the resumption of elongation from the new 3'terminus. GreA releases sequences of 2 to 3 nucleotides. This Caulobacter sp. (strain K31) protein is Transcription elongation factor GreA.